The chain runs to 273 residues: Large ribosomal subunit protein uL2c (273 aa).

The segment at 223 to 273 is disordered; it reads MNPVDHPHGGGEGRAPIGRKKPTTPWGYPALGRRSRKRNKYSDSFILRRRK.

The protein belongs to the universal ribosomal protein uL2 family. In terms of assembly, part of the 50S ribosomal subunit.

Its subcellular location is the plastid. The protein resides in the chloroplast. This Calycanthus floridus var. glaucus (Eastern sweetshrub) protein is Large ribosomal subunit protein uL2c (rpl2).